The sequence spans 394 residues: Stearoyl-[acyl-carrier-protein] 9-desaturase 1, chloroplastic (394 aa).

Residues 1–37 constitute a chloroplast transit peptide; that stretch reads MVMAMDRIALFSSSSSVYHHGSSHSHGSKSSRVFTIR. Residues Glu135, Glu173, His176, Glu226, Glu259, and His262 each coordinate Fe cation.

Belongs to the fatty acid desaturase type 2 family. As to quaternary structure, homodimer. Fe(2+) serves as cofactor. As to expression, ubiquitously expressed.

It is found in the plastid. It localises to the chloroplast. It carries out the reaction octadecanoyl-[ACP] + 2 reduced [2Fe-2S]-[ferredoxin] + O2 + 2 H(+) = (9Z)-octadecenoyl-[ACP] + 2 oxidized [2Fe-2S]-[ferredoxin] + 2 H2O. It participates in lipid metabolism; fatty acid metabolism. In terms of biological role, converts stearoyl-ACP to oleoyl-ACP by introduction of a cis double bond between carbons 9 and 10 of the acyl chain. This Arabidopsis thaliana (Mouse-ear cress) protein is Stearoyl-[acyl-carrier-protein] 9-desaturase 1, chloroplastic (S-ACP-DES1).